The sequence spans 450 residues: Bifunctional protein GlmU (450 aa).

The interval methionine 1–arginine 228 is pyrophosphorylase. Residues leucine 8–glycine 11, lysine 22, glutamine 75, glycine 80–threonine 81, tyrosine 103–aspartate 105, glycine 140, glutamate 154, asparagine 169, and asparagine 226 contribute to the UDP-N-acetyl-alpha-D-glucosamine site. Residue aspartate 105 participates in Mg(2+) binding. Position 226 (asparagine 226) interacts with Mg(2+). Positions alanine 229 to leucine 249 are linker. Residues glycine 250–threonine 450 form an N-acetyltransferase region. Residues arginine 315 and lysine 333 each coordinate UDP-N-acetyl-alpha-D-glucosamine. The Proton acceptor role is filled by histidine 345. UDP-N-acetyl-alpha-D-glucosamine is bound by residues tyrosine 348 and asparagine 359. Acetyl-CoA is bound by residues alanine 362, asparagine 368–tyrosine 369, serine 387, threonine 405, and arginine 422.

This sequence in the N-terminal section; belongs to the N-acetylglucosamine-1-phosphate uridyltransferase family. It in the C-terminal section; belongs to the transferase hexapeptide repeat family. In terms of assembly, homotrimer. Mg(2+) serves as cofactor.

Its subcellular location is the cytoplasm. The catalysed reaction is alpha-D-glucosamine 1-phosphate + acetyl-CoA = N-acetyl-alpha-D-glucosamine 1-phosphate + CoA + H(+). It catalyses the reaction N-acetyl-alpha-D-glucosamine 1-phosphate + UTP + H(+) = UDP-N-acetyl-alpha-D-glucosamine + diphosphate. Its pathway is nucleotide-sugar biosynthesis; UDP-N-acetyl-alpha-D-glucosamine biosynthesis; N-acetyl-alpha-D-glucosamine 1-phosphate from alpha-D-glucosamine 6-phosphate (route II): step 2/2. It participates in nucleotide-sugar biosynthesis; UDP-N-acetyl-alpha-D-glucosamine biosynthesis; UDP-N-acetyl-alpha-D-glucosamine from N-acetyl-alpha-D-glucosamine 1-phosphate: step 1/1. It functions in the pathway bacterial outer membrane biogenesis; LPS lipid A biosynthesis. In terms of biological role, catalyzes the last two sequential reactions in the de novo biosynthetic pathway for UDP-N-acetylglucosamine (UDP-GlcNAc). The C-terminal domain catalyzes the transfer of acetyl group from acetyl coenzyme A to glucosamine-1-phosphate (GlcN-1-P) to produce N-acetylglucosamine-1-phosphate (GlcNAc-1-P), which is converted into UDP-GlcNAc by the transfer of uridine 5-monophosphate (from uridine 5-triphosphate), a reaction catalyzed by the N-terminal domain. The chain is Bifunctional protein GlmU from Ruegeria pomeroyi (strain ATCC 700808 / DSM 15171 / DSS-3) (Silicibacter pomeroyi).